A 128-amino-acid polypeptide reads, in one-letter code: Fluoride-specific ion channel FluC (128 aa).

The next 4 membrane-spanning stretches (helical) occupy residues 10–30, 40–60, 71–91, and 102–122; these read FLAVAIGAALGACARWLAGLW, TLLVNLAGGYLIGLALAVLLA, AAVTGFLGGLTTFSTFSAETV, and ALGYAALSLVGSLALTALGLA. Na(+)-binding residues include glycine 78 and threonine 81.

It belongs to the fluoride channel Fluc/FEX (TC 1.A.43) family.

It localises to the cell inner membrane. The enzyme catalyses fluoride(in) = fluoride(out). Its activity is regulated as follows. Na(+) is not transported, but it plays an essential structural role and its presence is essential for fluoride channel function. Its function is as follows. Fluoride-specific ion channel. Important for reducing fluoride concentration in the cell, thus reducing its toxicity. The polypeptide is Fluoride-specific ion channel FluC (Bordetella petrii (strain ATCC BAA-461 / DSM 12804 / CCUG 43448)).